The sequence spans 151 residues: NADH dehydrogenase [ubiquinone] 1 beta subcomplex subunit 11, mitochondrial (151 aa).

The N-terminal 29 residues, M1–W29, are a transit peptide targeting the mitochondrion. Positions G40–E62 are disordered. The helical transmembrane segment at A87–V107 threads the bilayer.

It belongs to the complex I NDUFB11 subunit family. As to quaternary structure, complex I is composed of 45 different subunits. Interacts with BCAP31.

The protein resides in the mitochondrion inner membrane. Accessory subunit of the mitochondrial membrane respiratory chain NADH dehydrogenase (Complex I), that is believed not to be involved in catalysis. Complex I functions in the transfer of electrons from NADH to the respiratory chain. The immediate electron acceptor for the enzyme is believed to be ubiquinone. The sequence is that of NADH dehydrogenase [ubiquinone] 1 beta subcomplex subunit 11, mitochondrial (Ndufb11) from Mus musculus (Mouse).